The following is a 345-amino-acid chain: MMNNNGNQVSNLSNALRQVNIGNRNSNTTTDQSNINFEFPSGVNSNNSVQNSNNGRNGTQNNNNENSIKDTIEQHRQQQQAFSDMSHVEYSRITKFFQEQPLEGYTLFSHRSAPNGFKVAIVLSELGFHYNTIFLDFNLGEHRAPEFVSVNPNARVPALIDHNMDNLSIWESGAILLHLVNKYYKETGNPLLWSDDLADQSQINAWLFFQTSGHAPMIGQALHFRYFHSQKIASAVERYTDEVRRVYGVVEMALAERREALVMELDTENAAAYSAGTTPMSQSRFFDYPVWLVGDKLTIADLAFVPWNNVVDRIGINVKIEFPEVYKWTKHMMRRPAVIKALRGE.

The span at 22–36 (GNRNSNTTTDQSNIN) shows a compositional bias: polar residues. The segment at 22 to 66 (GNRNSNTTTDQSNINFEFPSGVNSNNSVQNSNNGRNGTQNNNNEN) is disordered. A compositionally biased stretch (low complexity) spans 41-66 (SGVNSNNSVQNSNNGRNGTQNNNNEN). The 85-residue stretch at 103-187 (EGYTLFSHRS…HLVNKYYKET (85 aa)) folds into the GST N-terminal domain. The region spanning 196–345 (DLADQSQINA…PAVIKALRGE (150 aa)) is the GST C-terminal domain.

This sequence belongs to the GST superfamily. As to quaternary structure, homodimer.

In terms of biological role, plays an important role in the cellular response to the nitrogen source. URE2 gene plays a major part in the repression of GLN1 and GDH2 genes by glutamine, and is required for the inactivation of glutamine synthetase. URE2 gene product may catalytically inactivate GLN3 in response to an increase in the intracellular concentration of glutamine. This Saccharomyces bayanus (Yeast) protein is Protein URE2 (URE2).